The sequence spans 764 residues: MDSEYYSGDQSDDGGATPVQDERDSGSDGEDDVNEQHSGSDTGSVDRHSENETSDREDGLTKIHNGTDSENDEPSNVHASDSESEELHRPKDSDSESEEHAESPASDSENEAVHQQGSDSEKEELLNGHASDSEKEEGRKHAASDSETEDTLQPQGSESDSEDPPRPQASDSESEEPPKPRISDSESEELPKPRISDSESEDPPRPQVSDSESEELPKPRVSDSESEDPPRPQASDSESEELPKPRVSDSESEDPQKGPASDSEAEDASRHKEKPESEDSDGENKREDSEVQNESDGHADRKGLHSSDSEEEEPKRQKIDSDDDGEKEGDEKVAKRKAAVLSDSEDEDKASAAKKSRVISDADDSDSDVVSDKSGKREKTVASDSEEEVGKEESSVKKSEEKDLFGSDSESGNEEENLIADIFGESGDEEEEEFTGFNQEDLEEEKNETQLKEAEDSDSDDNIKRGKHMDFLSDFEMMLQRKKSMCGKRRRNRDGGTFISDADDVVSAMIVKMNEAAEEDRQLNNQKKPALKKLTLLPTVVMHLKKQDLKETFIDSGVMSAIKEWLSPLPDRSLPALKIREELLKILQELPSVSQETLKHSGIGRAVMYLYKHPKESRSNKDMAGKLINEWSRPIFGLTSNYKGMTREEREQRDLEQMPQRRRMSSTGGQTPRRDLEKVLTGEEKALRPGDPGFCARARVPMPSNKDYVVRPKWNVEMESSRPGILKKGLSRLEKHKRRFAEQKRLSQMHRAVKFSIEGNRMPL.

An N-acetylmethionine modification is found at Met-1. Residues 1 to 465 (MDSEYYSGDQ…DSDSDDNIKR (465 aa)) are disordered. Ser-27, Ser-54, and Ser-69 each carry phosphoserine. Residues 44-67 (SVDRHSENETSDREDGLTKIHNGT) are compositionally biased toward basic and acidic residues. 2 stretches are compositionally biased toward basic and acidic residues: residues 85–102 (EELH…EHAE) and 119–144 (DSEK…HAAS). 30 positions are modified to phosphoserine: Ser-157, Ser-170, Ser-172, Ser-183, Ser-196, Ser-198, Ser-209, Ser-211, Ser-222, Ser-224, Ser-235, Ser-237, Ser-248, Ser-250, Ser-252, Ser-261, Ser-263, Ser-277, Ser-280, Ser-295, Ser-306, Ser-307, Ser-309, Ser-321, Ser-342, Ser-344, Ser-360, Ser-365, Ser-367, and Ser-371. The span at 176–197 (EPPKPRISDSESEELPKPRISD) shows a compositional bias: basic and acidic residues. Over residues 267–320 (DASRHKEKPESEDSDGENKREDSEVQNESDGHADRKGLHSSDSEEEEPKRQKID) the composition is skewed to basic and acidic residues. Positions 370-381 (VSDKSGKREKTV) are enriched in basic and acidic residues. Thr-380 carries the phosphothreonine modification. Residues Ser-383 and Ser-385 each carry the phosphoserine modification. Positions 391–405 (KEESSVKKSEEKDLF) are enriched in basic and acidic residues. 4 positions are modified to phosphoserine: Ser-407, Ser-409, Ser-411, and Ser-426. The Integrase domain-binding motif (IBM) motif lies at 415-441 (EENLIADIFGESGDEEEEEFTGFNQED). Over residues 426–446 (SGDEEEEEFTGFNQEDLEEEK) the composition is skewed to acidic residues. Position 435 is a phosphothreonine (Thr-435). Phosphoserine is present on residues Ser-457 and Ser-459. The interaction with SUPT6H and ALYREF stretch occupies residues 469–764 (MDFLSDFEMM…FSIEGNRMPL (296 aa)). Positions 560–638 (SAIKEWLSPL…NEWSRPIFGL (79 aa)) constitute a TFIIS N-terminal domain. The disordered stretch occupies residues 642-676 (YKGMTREEREQRDLEQMPQRRRMSSTGGQTPRRDL). The span at 645–656 (MTREEREQRDLE) shows a compositional bias: basic and acidic residues. Phosphothreonine is present on Thr-671.

This sequence belongs to the IWS1 family. In terms of assembly, interacts with SUPT6H; binds preferentially to the POLR2A-bound SUPT6H. Interacts with ALYREF/THOC4, SETD2 and PRMT5. Interacts with HDGFRP2. Interacts (via IBM motif) with PSIP1 (via IBD domain); phosphorylation increases its affinity for PSIP1. In terms of processing, phosphorylation increases its interaction with PSIP1.

Its subcellular location is the nucleus. In terms of biological role, transcription factor which plays a key role in defining the composition of the RNA polymerase II (RNAPII) elongation complex and in modulating the production of mature mRNA transcripts. Acts as an assembly factor to recruit various factors to the RNAPII elongation complex and is recruited to the complex via binding to the transcription elongation factor SUPT6H bound to the C-terminal domain (CTD) of the RNAPII subunit RPB1 (POLR2A). The SUPT6H:IWS1:CTD complex recruits mRNA export factors (ALYREF/THOC4, EXOSC10) as well as histone modifying enzymes (such as SETD2) to ensure proper mRNA splicing, efficient mRNA export and elongation-coupled H3K36 methylation, a signature chromatin mark of active transcription. The polypeptide is Protein IWS1 homolog (Iws1) (Rattus norvegicus (Rat)).